Here is a 148-residue protein sequence, read N- to C-terminus: Large ribosomal subunit protein bL9 (148 aa).

It belongs to the bacterial ribosomal protein bL9 family.

In terms of biological role, binds to the 23S rRNA. This chain is Large ribosomal subunit protein bL9, found in Frankia alni (strain DSM 45986 / CECT 9034 / ACN14a).